We begin with the raw amino-acid sequence, 310 residues long: Ribosomal RNA small subunit methyltransferase H (310 aa).

S-adenosyl-L-methionine contacts are provided by residues G32 to H34, D52, F79, D100, and Q107.

Belongs to the methyltransferase superfamily. RsmH family.

The protein localises to the cytoplasm. It carries out the reaction cytidine(1402) in 16S rRNA + S-adenosyl-L-methionine = N(4)-methylcytidine(1402) in 16S rRNA + S-adenosyl-L-homocysteine + H(+). In terms of biological role, specifically methylates the N4 position of cytidine in position 1402 (C1402) of 16S rRNA. The sequence is that of Ribosomal RNA small subunit methyltransferase H from Bacillus mycoides (strain KBAB4) (Bacillus weihenstephanensis).